Consider the following 586-residue polypeptide: Actin-related protein 9 (586 aa).

The segment at 141 to 169 (STPIVDKDADVDPLQRSTPDDTEPNSEEN) is disordered.

Belongs to the actin family. ARP8 subfamily.

This is Actin-related protein 9 (ARP9) from Oryza sativa subsp. indica (Rice).